A 432-amino-acid chain; its full sequence is Glutamate--cysteine ligase EgtA (432 aa).

This sequence belongs to the glutamate--cysteine ligase type 2 family. EgtA subfamily.

The enzyme catalyses L-cysteine + L-glutamate + ATP = gamma-L-glutamyl-L-cysteine + ADP + phosphate + H(+). It participates in amino-acid biosynthesis; ergothioneine biosynthesis. Catalyzes the synthesis of gamma-glutamylcysteine (gamma-GC) which is used as substrate for the biosynthesis of the low-molecular thiol compound ergothioneine (ERG). ERG is one of the major redox buffers which protects bacteria against redox stressors and antibiotics; loss of ERG or mycothiol (MSH, the other major redox buffer in this bacteria) leads to respiratory alterations and bioenergetic deficiencies that negatively impact virulence. This is Glutamate--cysteine ligase EgtA (egtA) from Mycobacterium tuberculosis (strain CDC 1551 / Oshkosh).